Here is a 665-residue protein sequence, read N- to C-terminus: Syntabulin (665 aa).

Basic and acidic residues predominate over residues 1-22 (MGPLRESKKEQRVQHQEKEISR). The tract at residues 1–271 (MGPLRESKKE…GVKPPNPEQY (271 aa)) is disordered. Residues 2–421 (GPLRESKKEQ…DKLPDGLSLE (420 aa)) form a sufficient for interaction with KIF5B region. Residues 35–52 (PQQQQQQQNKVSPASESP) show a composition bias toward low complexity. Phosphoserine is present on serine 54. Low complexity predominate over residues 61 to 77 (FNPSSSGRSARTISSNS). Residues 85–101 (CPSSQSVSPVKTPSDTG) are compositionally biased toward polar residues. Serine 111 is modified (phosphoserine). The segment covering 141–162 (GGIIKPGSEADFSSSSSTGSIS) has biased composition (low complexity). Residues 168-180 (MSTTGNKRASFSR) are compositionally biased toward polar residues. Residues 225–245 (SYAPSSPSSSNSGSYKGSDCS) show a composition bias toward low complexity. Residues 275 to 357 (LQQKEVTVRH…MRSSLADKDK (83 aa)) are a coiled coil. The sufficient for interaction with STX1A stretch occupies residues 314–421 (REDWIEEECH…DKLPDGLSLE (108 aa)). Phosphoserine occurs at positions 400 and 557. A helical transmembrane segment spans residues 609 to 629 (FLVDLLAVAAPVVPTVLWAFS).

In terms of assembly, interacts with STX1A and KIF5B.

The protein localises to the golgi apparatus membrane. Functionally, part of a kinesin motor-adapter complex that is critical for the anterograde axonal transport of active zone components and contributes to activity-dependent presynaptic assembly during neuronal development. This is Syntabulin (Sybu) from Mus musculus (Mouse).